The chain runs to 630 residues: Chaperone protein HtpG (630 aa).

Residues 1–327 (MSVETYKFDA…SEDLSLNISR (327 aa)) form an a; substrate-binding region. The tract at residues 328–551 (ETLQHSPLID…EGSMDIRTER (224 aa)) is b. The span at 483–499 (TKTAKSSDTNNDGKDDT) shows a compositional bias: basic and acidic residues. Residues 483 to 504 (TKTAKSSDTNNDGKDDTSSSDD) form a disordered region. The interval 552 to 630 (FLIEQKQLSS…INFFIEKSVN (79 aa)) is c.

Belongs to the heat shock protein 90 family. In terms of assembly, homodimer.

Its subcellular location is the cytoplasm. Functionally, molecular chaperone. Has ATPase activity. The polypeptide is Chaperone protein HtpG (Orientia tsutsugamushi (strain Boryong) (Rickettsia tsutsugamushi)).